The primary structure comprises 488 residues: PPE family protein PPE10 (488 aa).

2 disordered regions span residues 207-232 (NNNW…NIGS) and 443-488 (SDAG…LRTE).

This sequence belongs to the mycobacterial PPE family.

It is found in the secreted. In terms of biological role, plays a major role in the integrity and stability of the capsule. The polypeptide is PPE family protein PPE10 (Mycobacterium marinum (strain ATCC BAA-535 / M)).